Consider the following 466-residue polypeptide: Histidine--tRNA ligase (466 aa).

The protein belongs to the class-II aminoacyl-tRNA synthetase family. In terms of assembly, homodimer.

It is found in the cytoplasm. The enzyme catalyses tRNA(His) + L-histidine + ATP = L-histidyl-tRNA(His) + AMP + diphosphate + H(+). In Xylella fastidiosa (strain M23), this protein is Histidine--tRNA ligase.